Reading from the N-terminus, the 257-residue chain is Thiazole synthase (257 aa).

K95 functions as the Schiff-base intermediate with DXP in the catalytic mechanism. 1-deoxy-D-xylulose 5-phosphate is bound by residues G156, 182–183 (AG), and 204–205 (NT).

It belongs to the ThiG family. Homotetramer. Forms heterodimers with either ThiH or ThiS.

It localises to the cytoplasm. The catalysed reaction is [ThiS sulfur-carrier protein]-C-terminal-Gly-aminoethanethioate + 2-iminoacetate + 1-deoxy-D-xylulose 5-phosphate = [ThiS sulfur-carrier protein]-C-terminal Gly-Gly + 2-[(2R,5Z)-2-carboxy-4-methylthiazol-5(2H)-ylidene]ethyl phosphate + 2 H2O + H(+). The protein operates within cofactor biosynthesis; thiamine diphosphate biosynthesis. Functionally, catalyzes the rearrangement of 1-deoxy-D-xylulose 5-phosphate (DXP) to produce the thiazole phosphate moiety of thiamine. Sulfur is provided by the thiocarboxylate moiety of the carrier protein ThiS. In vitro, sulfur can be provided by H(2)S. The chain is Thiazole synthase from Fusobacterium nucleatum subsp. nucleatum (strain ATCC 25586 / DSM 15643 / BCRC 10681 / CIP 101130 / JCM 8532 / KCTC 2640 / LMG 13131 / VPI 4355).